Consider the following 149-residue polypeptide: Transcriptional regulator MraZ (149 aa).

SpoVT-AbrB domains lie at 7–54 (KYIN…GIAH) and 83–126 (AVQL…QPQN).

It belongs to the MraZ family. In terms of assembly, forms oligomers.

Its subcellular location is the cytoplasm. It localises to the nucleoid. The polypeptide is Transcriptional regulator MraZ (Rickettsia typhi (strain ATCC VR-144 / Wilmington)).